We begin with the raw amino-acid sequence, 225 residues long: Insulin-induced gene 2 protein (225 aa).

Residues 1–28 (MAEGETKSPGPKKCGPYISSVTSQSVNL) are Cytoplasmic-facing. Residues 29-51 (MIRGVVLFFIGVFLALVLNLLQI) form a helical membrane-spanning segment. The Lumenal segment spans residues 52–70 (QRNVTLFPPDVIASIFSSA). A helical transmembrane segment spans residues 71-88 (WWVPPCCGTASAVIGLLY). Residues 89–103 (PCIDRHLGEPHKFKR) lie on the Cytoplasmic side of the membrane. The chain crosses the membrane as a helical span at residues 104–126 (EWSSVMRCVAVFVGINHASAKVD). Residues 127 to 129 (FDN) lie on the Lumenal side of the membrane. The chain crosses the membrane as a helical span at residues 130–148 (NIQLSLTLAALSIGLWWTF). Residues 149 to 153 (DRSRS) are Cytoplasmic-facing. S151 carries the phosphoserine modification. The helical transmembrane segment at 154-175 (GFGLGVGIAFLATVVTQLLVYN) threads the bilayer. At 176 to 189 (GVYQYTSPDFLYVR) the chain is on the lumenal side. Residues 190–207 (SWLPCIFFAGGITMGNIG) form a helical membrane-spanning segment. The Cytoplasmic segment spans residues 208-225 (RQLAMYECKVIAEKSHQE). C215 carries the post-translational modification Cysteine sulfenic acid (-SOH); alternate. C215 participates in a covalent cross-link: Glycyl cysteine thioester (Cys-Gly) (interchain with G-Cter in ubiquitin); alternate. The short motif at 219–225 (AEKSHQE) is the KxHxx element.

It belongs to the INSIG family. Interacts with SCAP; interaction is direct and only takes place in the presence of sterols; it prevents interaction between SCAP and the coat protein complex II (COPII). Associates with the SCAP-SREBP complex (composed of SCAP and SREBF1/SREBP1 or SREBF2/SREBP2); association is mediated via its interaction with SCAP and only takes place in the presence of sterols. Interacts with RNF139. Interacts with RNF145. In terms of processing, phosphorylation at Ser-151 by PCK1 reduces binding to oxysterol, disrupting the interaction between INSIG2 and SCAP, thereby promoting nuclear translocation of SREBP proteins (SREBF1/SREBP1 or SREBF2/SREBP2) and subsequent transcription of downstream lipogenesis-related genes. Polyubiquitinated by AMFR/gp78 at Cys-215 in some tissues such as adipose tissues, undifferentiated myoblasts and liver, leading to its degradation. In differentiated myotubes, Cys-215 oxidation prevents ubiquitination at the same site, resulting in protein stabilization. Post-translationally, oxidized at Cys-215 in differentiated myotubes, preventing ubiquitination at the same site, and resulting in protein stabilization.

The protein resides in the endoplasmic reticulum membrane. Its function is as follows. Oxysterol-binding protein that mediates feedback control of cholesterol synthesis by controlling both endoplasmic reticulum to Golgi transport of SCAP and degradation of HMGCR. Acts as a negative regulator of cholesterol biosynthesis by mediating the retention of the SCAP-SREBP complex in the endoplasmic reticulum, thereby blocking the processing of sterol regulatory element-binding proteins (SREBPs) SREBF1/SREBP1 and SREBF2/SREBP2. Binds oxysterol, including 22-hydroxycholesterol, 24-hydroxycholesterol, 25-hydroxycholesterol and 27-hydroxycholesterol, regulating interaction with SCAP and retention of the SCAP-SREBP complex in the endoplasmic reticulum. In presence of oxysterol, interacts with SCAP, retaining the SCAP-SREBP complex in the endoplasmic reticulum, thereby preventing SCAP from escorting SREBF1/SREBP1 and SREBF2/SREBP2 to the Golgi. Sterol deprivation or phosphorylation by PCK1 reduce oxysterol-binding, disrupting the interaction between INSIG2 and SCAP, thereby promoting Golgi transport of the SCAP-SREBP complex, followed by processing and nuclear translocation of SREBF1/SREBP1 and SREBF2/SREBP2. Also regulates cholesterol synthesis by regulating degradation of HMGCR: initiates the sterol-mediated ubiquitin-mediated endoplasmic reticulum-associated degradation (ERAD) of HMGCR via recruitment of the reductase to the ubiquitin ligase RNF139. In Pongo abelii (Sumatran orangutan), this protein is Insulin-induced gene 2 protein.